The primary structure comprises 430 residues: Enolase (430 aa).

Residue Gln-163 coordinates (2R)-2-phosphoglycerate. The active-site Proton donor is Glu-205. Mg(2+)-binding residues include Asp-242, Glu-287, and Asp-314. Residues Lys-339, Arg-368, Ser-369, and Lys-390 each coordinate (2R)-2-phosphoglycerate. The active-site Proton acceptor is the Lys-339.

It belongs to the enolase family. It depends on Mg(2+) as a cofactor.

Its subcellular location is the cytoplasm. It localises to the secreted. The protein localises to the cell surface. The enzyme catalyses (2R)-2-phosphoglycerate = phosphoenolpyruvate + H2O. Its pathway is carbohydrate degradation; glycolysis; pyruvate from D-glyceraldehyde 3-phosphate: step 4/5. In terms of biological role, catalyzes the reversible conversion of 2-phosphoglycerate (2-PG) into phosphoenolpyruvate (PEP). It is essential for the degradation of carbohydrates via glycolysis. The protein is Enolase of Bacillus pumilus (strain SAFR-032).